The sequence spans 345 residues: MSTFRSIEWKKDKLVLLDQRYLPEKTLYLELKTVDEVARAIKEMTVRGAPAIGVAAAYGMVLCVQKLSKNDDLIRELQKADDLLRASRPTAVNLFWALDRMKKIWQGFNGSLEDLKMILEKEATDIEREDVEINKQIAKNGVELVPFGAKIIHHCNTGSLATVDYGTALGVIRYAHEIGKKIHVFLDETRPRLQGARLSAWEMKELGIPHTIIVDGASGLVMKKFKIDLALVGADRIAANGDTANKIGTYNLAIVAKYHNVPLYVVAPTSTIDLKTPAGQDIPIEERSADEIRCVGNSQVAPQESPVFNPAFDVTPAELISGIITEKGIVYPPFKENLRKLFESA.

Residues 47-49 (RGA), arginine 88, and glutamine 194 each bind substrate. Catalysis depends on aspartate 235, which acts as the Proton donor. Position 245-246 (245-246 (NK)) interacts with substrate.

It belongs to the eIF-2B alpha/beta/delta subunits family. MtnA subfamily.

The catalysed reaction is 5-(methylsulfanyl)-alpha-D-ribose 1-phosphate = 5-(methylsulfanyl)-D-ribulose 1-phosphate. Its pathway is amino-acid biosynthesis; L-methionine biosynthesis via salvage pathway; L-methionine from S-methyl-5-thio-alpha-D-ribose 1-phosphate: step 1/6. Functionally, catalyzes the interconversion of methylthioribose-1-phosphate (MTR-1-P) into methylthioribulose-1-phosphate (MTRu-1-P). The polypeptide is Methylthioribose-1-phosphate isomerase 2 (Pseudothermotoga lettingae (strain ATCC BAA-301 / DSM 14385 / NBRC 107922 / TMO) (Thermotoga lettingae)).